The sequence spans 175 residues: ATP synthase subunit b (175 aa).

A helical membrane pass occupies residues 14 to 34 (LSPNPGLIFWTTVSFVIVLLI).

Belongs to the ATPase B chain family. In terms of assembly, F-type ATPases have 2 components, F(1) - the catalytic core - and F(0) - the membrane proton channel. F(1) has five subunits: alpha(3), beta(3), gamma(1), delta(1), epsilon(1). F(0) has four main subunits: a(1), b(2) and c(10-14). The alpha and beta chains form an alternating ring which encloses part of the gamma chain. F(1) is attached to F(0) by a central stalk formed by the gamma and epsilon chains, while a peripheral stalk is formed by the delta and b chains.

It is found in the cell inner membrane. In terms of biological role, f(1)F(0) ATP synthase produces ATP from ADP in the presence of a proton or sodium gradient. F-type ATPases consist of two structural domains, F(1) containing the extramembraneous catalytic core and F(0) containing the membrane proton channel, linked together by a central stalk and a peripheral stalk. During catalysis, ATP synthesis in the catalytic domain of F(1) is coupled via a rotary mechanism of the central stalk subunits to proton translocation. Its function is as follows. Component of the F(0) channel, it forms part of the peripheral stalk, linking F(1) to F(0). This Chlorobium phaeobacteroides (strain DSM 266 / SMG 266 / 2430) protein is ATP synthase subunit b.